Here is a 336-residue protein sequence, read N- to C-terminus: Ketol-acid reductoisomerase (NADP(+)) (336 aa).

Residues 1–182 (MAVIYYDKDA…GVTRAGVIET (182 aa)) form the KARI N-terminal Rossmann domain. NADP(+) is bound by residues 25–28 (FGSQ), R48, S51, S53, and 83–86 (DEHQ). H108 is a catalytic residue. G134 contributes to the NADP(+) binding site. Positions 183–328 (TFKEETETDL…KELRKMMPWL (146 aa)) constitute a KARI C-terminal knotted domain. Mg(2+)-binding residues include D191, E195, E227, and E231. Substrate is bound at residue S252.

Belongs to the ketol-acid reductoisomerase family. It depends on Mg(2+) as a cofactor.

It catalyses the reaction (2R)-2,3-dihydroxy-3-methylbutanoate + NADP(+) = (2S)-2-acetolactate + NADPH + H(+). The enzyme catalyses (2R,3R)-2,3-dihydroxy-3-methylpentanoate + NADP(+) = (S)-2-ethyl-2-hydroxy-3-oxobutanoate + NADPH + H(+). The protein operates within amino-acid biosynthesis; L-isoleucine biosynthesis; L-isoleucine from 2-oxobutanoate: step 2/4. It participates in amino-acid biosynthesis; L-valine biosynthesis; L-valine from pyruvate: step 2/4. Functionally, involved in the biosynthesis of branched-chain amino acids (BCAA). Catalyzes an alkyl-migration followed by a ketol-acid reduction of (S)-2-acetolactate (S2AL) to yield (R)-2,3-dihydroxy-isovalerate. In the isomerase reaction, S2AL is rearranged via a Mg-dependent methyl migration to produce 3-hydroxy-3-methyl-2-ketobutyrate (HMKB). In the reductase reaction, this 2-ketoacid undergoes a metal-dependent reduction by NADPH to yield (R)-2,3-dihydroxy-isovalerate. In Thermotoga neapolitana (strain ATCC 49049 / DSM 4359 / NBRC 107923 / NS-E), this protein is Ketol-acid reductoisomerase (NADP(+)).